We begin with the raw amino-acid sequence, 39 residues long: Omega-theraphotoxin-Ba1a (39 aa).

3 disulfide bridges follow: C4-C25, C8-C31, and C17-C36.

Belongs to the neurotoxin 12 (Hwtx-2) family. 06 (TXP1) subfamily. As to expression, expressed by the venom gland.

It localises to the secreted. Inhibits voltage-gated calcium channels (Cav) in rat cerebellar granule cells. Has insecticidal activity to crickets (Acheta domesticus). Is not toxic to mice. This is Omega-theraphotoxin-Ba1a from Brachypelma albiceps (Mexican golden redrump tarantula).